The primary structure comprises 129 residues: UPF0325 protein SG1947 (129 aa).

It belongs to the UPF0325 family.

This Sodalis glossinidius (strain morsitans) protein is UPF0325 protein SG1947.